The primary structure comprises 209 residues: MDGVTVIGHPLVQHKLTIMRKKETSTAGFRRLLKEISTLLCYEVTRDLELTTERIETPLEETDAPVLEGKKLVFASILRAGNGLLEGMLELVPSARVAHIGVYRDHETLQAVEYFFKAPDNINERLVIVVDPMLATGNSSIAAVEKLKERGARNIRFLCLLAAPEGIRNFQGVHPDVPIFTASIDSHLNELGYIVPGLGDAGDRMYGTK.

Residues R79, R104, and D131–S139 contribute to the 5-phospho-alpha-D-ribose 1-diphosphate site. Uracil is bound by residues I194 and G199–A201. D200 contributes to the 5-phospho-alpha-D-ribose 1-diphosphate binding site.

It belongs to the UPRTase family. Requires Mg(2+) as cofactor.

The enzyme catalyses UMP + diphosphate = 5-phospho-alpha-D-ribose 1-diphosphate + uracil. The protein operates within pyrimidine metabolism; UMP biosynthesis via salvage pathway; UMP from uracil: step 1/1. Allosterically activated by GTP. Its function is as follows. Catalyzes the conversion of uracil and 5-phospho-alpha-D-ribose 1-diphosphate (PRPP) to UMP and diphosphate. The protein is Uracil phosphoribosyltransferase of Sinorhizobium medicae (strain WSM419) (Ensifer medicae).